A 143-amino-acid chain; its full sequence is Hexaprenyl-diphosphate synthase small subunit ((2E,6E)-farnesyl-diphosphate specific) (143 aa).

Dimer of heterodimer or heterotetramer composed of a small (Hexs-a) and large (Hexs-B) subunit.

It catalyses the reaction 3 isopentenyl diphosphate + (2E,6E)-farnesyl diphosphate = all-trans-hexaprenyl diphosphate + 3 diphosphate. In terms of biological role, catalyzes the condensation of three molecules of isopentenyl diphosphate with farnesyl diphosphate (FPP) to yield (all-E)-hexaprenyl diphosphate (HexPP; C30), the precursor of the prenyl side chain of menaquinone-6. Large subunit Hexs-B catalyzes the condensation reaction and the final product chain length is cooperatively regulated by both the Hexs-A and Hexs-B subunits using the whole size of the hydrophobic cleft as a ruler. The sequence is that of Hexaprenyl-diphosphate synthase small subunit ((2E,6E)-farnesyl-diphosphate specific) (hexs-a) from Micrococcus luteus (Micrococcus lysodeikticus).